The sequence spans 463 residues: RuvB-like 2 (463 aa).

Residue 77–84 (GQPGTGKT) coordinates ATP.

This sequence belongs to the RuvB family. Forms homohexameric rings. Can form a dodecamer with ruvbl1 made of two stacked hexameric rings. Component of the chromatin-remodeling Ino80 complex. Component of some MLL1/MLL complex.

Its subcellular location is the nucleus. It is found in the dynein axonemal particle. The catalysed reaction is ATP + H2O = ADP + phosphate + H(+). Its function is as follows. Has double-stranded DNA-stimulated ATPase activity. Has ATP-dependent DNA helicase (5' to 3') activity suggesting a role in nuclear processes such as recombination and transcription. Represses gene activation mediated by beta-catenin. Proposed core component of the chromatin remodeling Ino80 complex which exhibits DNA- and nucleosome-activated ATPase activity and catalyzes ATP-dependent nucleosome sliding. Involved in the endoplasmic reticulum (ER)-associated degradation (ERAD) pathway where it negatively regulates expression of ER stress response genes. May act as a regulator of embryonic heart growth. The sequence is that of RuvB-like 2 (ruvbl2) from Danio rerio (Zebrafish).